Consider the following 325-residue polypeptide: Glutarate 2-hydroxylase (325 aa).

Positions 160, 162, and 292 each coordinate Fe cation.

The protein belongs to the glutarate hydroxylase family. As to quaternary structure, homotetramer. Fe(2+) is required as a cofactor.

It carries out the reaction glutarate + 2-oxoglutarate + O2 = (S)-2-hydroxyglutarate + succinate + CO2. Its pathway is amino-acid degradation. In terms of biological role, acts as an alpha-ketoglutarate-dependent dioxygenase catalyzing hydroxylation of glutarate (GA) to L-2-hydroxyglutarate (L2HG). Functions in a L-lysine degradation pathway that proceeds via cadaverine, glutarate and L-2-hydroxyglutarate. The sequence is that of Glutarate 2-hydroxylase from Escherichia fergusonii (strain ATCC 35469 / DSM 13698 / CCUG 18766 / IAM 14443 / JCM 21226 / LMG 7866 / NBRC 102419 / NCTC 12128 / CDC 0568-73).